The chain runs to 243 residues: PF03932 family protein CutC (243 aa).

This sequence belongs to the CutC family.

The protein localises to the cytoplasm. This is PF03932 family protein CutC from Glaesserella parasuis serovar 5 (strain SH0165) (Haemophilus parasuis).